Here is a 100-residue protein sequence, read N- to C-terminus: Aspartyl/glutamyl-tRNA(Asn/Gln) amidotransferase subunit C (100 aa).

It belongs to the GatC family. As to quaternary structure, heterotrimer of A, B and C subunits.

It carries out the reaction L-glutamyl-tRNA(Gln) + L-glutamine + ATP + H2O = L-glutaminyl-tRNA(Gln) + L-glutamate + ADP + phosphate + H(+). It catalyses the reaction L-aspartyl-tRNA(Asn) + L-glutamine + ATP + H2O = L-asparaginyl-tRNA(Asn) + L-glutamate + ADP + phosphate + 2 H(+). Its function is as follows. Allows the formation of correctly charged Asn-tRNA(Asn) or Gln-tRNA(Gln) through the transamidation of misacylated Asp-tRNA(Asn) or Glu-tRNA(Gln) in organisms which lack either or both of asparaginyl-tRNA or glutaminyl-tRNA synthetases. The reaction takes place in the presence of glutamine and ATP through an activated phospho-Asp-tRNA(Asn) or phospho-Glu-tRNA(Gln). This Streptococcus pneumoniae (strain JJA) protein is Aspartyl/glutamyl-tRNA(Asn/Gln) amidotransferase subunit C.